We begin with the raw amino-acid sequence, 376 residues long: uncharacterized protein (376 aa).

The N-terminal stretch at 1–28 (MCKPRVWRIAHTIVHVGALLLGTSQLTT) is a signal peptide. Cysteine 29 carries N-palmitoyl cysteine lipidation. Cysteine 29 carries the S-diacylglycerol cysteine lipid modification.

Belongs to the TP013X lipoprotein family.

It localises to the cell membrane. This is an uncharacterized protein from Treponema pallidum (strain Nichols).